The primary structure comprises 542 residues: Peptide chain release factor 3 (542 aa).

The tr-type G domain occupies 14-283 (DKRRNFAIIS…AFLEYALKPG (270 aa)). Residues 23-30 (SHPDAGKT), 91-95 (DTPGH), and 145-148 (NKMD) contribute to the GTP site.

It belongs to the TRAFAC class translation factor GTPase superfamily. Classic translation factor GTPase family. PrfC subfamily.

It is found in the cytoplasm. Functionally, increases the formation of ribosomal termination complexes and stimulates activities of RF-1 and RF-2. It binds guanine nucleotides and has strong preference for UGA stop codons. It may interact directly with the ribosome. The stimulation of RF-1 and RF-2 is significantly reduced by GTP and GDP, but not by GMP. This is Peptide chain release factor 3 from Trichodesmium erythraeum (strain IMS101).